Reading from the N-terminus, the 1036-residue chain is Isoleucine--tRNA ligase (1036 aa).

The short motif at 46 to 56 is the 'HIGH' region element; sequence PFATGLPHYGH. The short motif at 589-593 is the 'KMSKS' region element; that stretch reads KMSKR. K592 provides a ligand contact to ATP.

Belongs to the class-I aminoacyl-tRNA synthetase family. IleS type 2 subfamily. In terms of assembly, monomer. Zn(2+) serves as cofactor.

It is found in the cytoplasm. It carries out the reaction tRNA(Ile) + L-isoleucine + ATP = L-isoleucyl-tRNA(Ile) + AMP + diphosphate. Catalyzes the attachment of isoleucine to tRNA(Ile). As IleRS can inadvertently accommodate and process structurally similar amino acids such as valine, to avoid such errors it has two additional distinct tRNA(Ile)-dependent editing activities. One activity is designated as 'pretransfer' editing and involves the hydrolysis of activated Val-AMP. The other activity is designated 'posttransfer' editing and involves deacylation of mischarged Val-tRNA(Ile). This is Isoleucine--tRNA ligase from Chlamydia trachomatis serovar A (strain ATCC VR-571B / DSM 19440 / HAR-13).